A 478-amino-acid chain; its full sequence is Kynureninase (478 aa).

Residues leucine 138, threonine 139, 166–169 (FPSD), aspartate 252, histidine 255, and tyrosine 277 each bind pyridoxal 5'-phosphate. The residue at position 278 (lysine 278) is an N6-(pyridoxal phosphate)lysine. Pyridoxal 5'-phosphate contacts are provided by tryptophan 315 and asparagine 343.

The protein belongs to the kynureninase family. In terms of assembly, homodimer. Pyridoxal 5'-phosphate is required as a cofactor.

The protein resides in the cytoplasm. It catalyses the reaction L-kynurenine + H2O = anthranilate + L-alanine + H(+). The enzyme catalyses 3-hydroxy-L-kynurenine + H2O = 3-hydroxyanthranilate + L-alanine + H(+). It participates in amino-acid degradation; L-kynurenine degradation; L-alanine and anthranilate from L-kynurenine: step 1/1. It functions in the pathway cofactor biosynthesis; NAD(+) biosynthesis; quinolinate from L-kynurenine: step 2/3. In terms of biological role, catalyzes the cleavage of L-kynurenine (L-Kyn) and L-3-hydroxykynurenine (L-3OHKyn) into anthranilic acid (AA) and 3-hydroxyanthranilic acid (3-OHAA), respectively. This Coccidioides immitis (strain RS) (Valley fever fungus) protein is Kynureninase.